The following is a 411-amino-acid chain: Mitogen-activated protein kinase 8 (411 aa).

The region spanning 26 to 321 is the Protein kinase domain; that stretch reads YQNLKPIGSG…VDEALQHPYI (296 aa). ATP-binding positions include 32–40 and Lys-55; that span reads IGSGAQGIV. Cys-116 carries the S-nitrosocysteine; in inhibited form modification. Catalysis depends on Asp-151, which acts as the Proton acceptor. Residue Thr-183 is modified to Phosphothreonine; by MAP2K7. Positions 183–185 match the TXY motif; sequence TPY. Tyr-185 carries the phosphotyrosine; by MAP2K4 modification. The segment at 368 to 411 is disordered; the sequence is KNGVIRGQPSPLGAAVINGSQHPVSSPSVNDMSSMSTDPTLASD. Residue Ser-377 is modified to Phosphoserine. Residues 390–403 are compositionally biased toward low complexity; the sequence is PVSSPSVNDMSSMS.

It belongs to the protein kinase superfamily. CMGC Ser/Thr protein kinase family. MAP kinase subfamily. As to quaternary structure, forms a complex with MAPK8IP1 and ARHGEF28. Found in a complex with SH3RF1, RAC1, MAP3K11/MLK3, MAP2K7/MKK7 and MAPK8IP1/JIP1. Found in a complex with SH3RF1, RAC2, MAP3K7/TAK1, MAP2K7/MKK7, MAPK8IP1/JIP1 and MAPK9/JNK2. Binds to at least four scaffolding proteins, MAPK8IP1/JIP-1, MAPK8IP2/JIP-2, MAPK8IP3/JIP-3/JSAP1 and SPAG9/MAPK8IP4/JIP-4. These proteins also bind other components of the JNK signaling pathway. Interacts with TP53, WWOX. Interacts with JAMP. Interacts with NFATC4. Interacts (phosphorylated form) with NFE2; the interaction phosphorylates NFE2 in undifferentiated cells. Interacts with MECOM; regulates JNK signaling. Interacts with PIN1; this interaction mediates MAPK8 conformational changes leading to the binding of MAPK8 to its substrates. Interacts with HSF1 (via D domain and preferentially with hyperphosphorylated form); this interaction occurs under both normal growth conditions and immediately upon heat shock. Interacts with STMN2, STMN3 and STMN4. Interacts with GRIPAP1. Interacts with POU5F1; phosphorylates POU5F1 at 'Ser-347'. Interacts with HSF4. Mg(2+) serves as cofactor. Dually phosphorylated on Thr-183 and Tyr-185 by MAP2K7 and MAP2K4, which activates the enzyme. Phosphorylated by TAOK2. Phosphorylated form is more concentrated at synapses than none-phosphorylated. Post-translationally, nitrosylated upon IFN-gamma-induced endogenous NO production, which inhibits the enzyme. May be phosphorylated at Thr-183 and Tyr-185 by MAP3K1/MEKK1.

It is found in the cytoplasm. The protein resides in the nucleus. The protein localises to the synapse. The enzyme catalyses L-seryl-[protein] + ATP = O-phospho-L-seryl-[protein] + ADP + H(+). It carries out the reaction L-threonyl-[protein] + ATP = O-phospho-L-threonyl-[protein] + ADP + H(+). With respect to regulation, activated by threonine and tyrosine phosphorylation by either of two dual specificity kinases, MAP2K4 and MAP2K7. MAP2K4 shows a strong preference for Tyr-185 while MAP2K7 phosphorylates Tyr-183 preferentially. Inhibited by dual specificity phosphatases, such as DUSP1. Inhibited by SERPINB3. Inhibited by IFN-gamma-induced S-nitrosylation. Functionally, serine/threonine-protein kinase involved in various processes such as cell proliferation, differentiation, migration, transformation and programmed cell death. Extracellular stimuli such as pro-inflammatory cytokines or physical stress stimulate the stress-activated protein kinase/c-Jun N-terminal kinase (SAP/JNK) signaling pathway. In this cascade, two dual specificity kinases MAP2K4/MKK4 and MAP2K7/MKK7 phosphorylate and activate MAPK8/JNK1. In turn, MAPK8/JNK1 phosphorylates a number of transcription factors, primarily components of AP-1 such as JUN, JDP2 and ATF2 and thus regulates AP-1 transcriptional activity. Phosphorylates the replication licensing factor CDT1, inhibiting the interaction between CDT1 and the histone H4 acetylase HBO1 to replication origins. Loss of this interaction abrogates the acetylation required for replication initiation. Promotes stressed cell apoptosis by phosphorylating key regulatory factors including p53/TP53 and Yes-associates protein YAP1. In T-cells, MAPK8 and MAPK9 are required for polarized differentiation of T-helper cells into Th1 cells. Contributes to the survival of erythroid cells by phosphorylating the antagonist of cell death BAD upon EPO stimulation. Mediates starvation-induced BCL2 phosphorylation, BCL2 dissociation from BECN1, and thus activation of autophagy. Phosphorylates STMN2 and hence regulates microtubule dynamics, controlling neurite elongation in cortical neurons. In the developing brain, through its cytoplasmic activity on STMN2, negatively regulates the rate of exit from multipolar stage and of radial migration from the ventricular zone. Phosphorylates several other substrates including heat shock factor protein 4 (HSF4), the deacetylase SIRT1, ELK1, or the E3 ligase ITCH. Phosphorylates the CLOCK-BMAL1 heterodimer and plays a role in the regulation of the circadian clock. Phosphorylates the heat shock transcription factor HSF1, suppressing HSF1-induced transcriptional activity. Phosphorylates POU5F1, which results in the inhibition of POU5F1's transcriptional activity and enhances its proteasomal degradation. Phosphorylates JUND and this phosphorylation is inhibited in the presence of MEN1. In neurons, phosphorylates SYT4 which captures neuronal dense core vesicles at synapses. Phosphorylates EIF4ENIF1/4-ET in response to oxidative stress, promoting P-body assembly. Phosphorylates SIRT6 in response to oxidative stress, stimulating its mono-ADP-ribosyltransferase activity. Phosphorylates NLRP3, promoting assembly of the NLRP3 inflammasome. Phosphorylates ALKBH5 in response to reactive oxygen species (ROS), promoting ALKBH5 sumoylation and inactivation. This chain is Mitogen-activated protein kinase 8 (Mapk8), found in Rattus norvegicus (Rat).